We begin with the raw amino-acid sequence, 109 residues long: Ubiquitin-related modifier 1 homolog (109 aa).

Gly109 is subject to 1-thioglycine. Gly109 is covalently cross-linked (Glycyl lysine isopeptide (Gly-Lys) (interchain with K-? in acceptor proteins)).

Belongs to the URM1 family. In terms of processing, C-terminal thiocarboxylation occurs in 2 steps, it is first acyl-adenylated (-COAMP) via the hesA/moeB/thiF part of the MOCS3 homolog, then thiocarboxylated (-COSH) via the rhodanese domain of the MOCS3 homolog.

Its subcellular location is the cytoplasm. It functions in the pathway tRNA modification; 5-methoxycarbonylmethyl-2-thiouridine-tRNA biosynthesis. Functionally, acts as a sulfur carrier required for 2-thiolation of mcm(5)S(2)U at tRNA wobble positions of cytosolic tRNA(Lys), tRNA(Glu) and tRNA(Gln). Serves as sulfur donor in tRNA 2-thiolation reaction by being thiocarboxylated (-COSH) at its C-terminus by MOCS3. The sulfur is then transferred to tRNA to form 2-thiolation of mcm(5)S(2)U. Also acts as a ubiquitin-like protein (UBL) that is covalently conjugated via an isopeptide bond to lysine residues of target proteins. The thiocarboxylated form serves as substrate for conjugation and oxidative stress specifically induces the formation of UBL-protein conjugates. This is Ubiquitin-related modifier 1 homolog from Culex quinquefasciatus (Southern house mosquito).